We begin with the raw amino-acid sequence, 349 residues long: Guanine nucleotide-binding protein alpha-13 subunit (349 aa).

A lipid anchor (N-myristoyl glycine) is attached at Gly2. Cys3 carries S-palmitoyl cysteine lipidation. The G-alpha domain maps to Ser35 to Arg349. The tract at residues Arg38–Thr51 is G1 motif. Residues Gly43 to Thr50, Ile177 to Thr183, Asp202 to Gln206, Asn271 to Asp274, and Ala327 each bind GTP. Residues Asp175 to Thr183 are G2 motif. Residue Thr183 coordinates Mg(2+). Residues Phe198–Lys207 are G3 motif. The interval Tyr267–Asp274 is G4 motif. Positions Cys325–Thr330 are G5 motif.

The protein belongs to the G-alpha family. As to quaternary structure, g proteins are composed of 3 units; alpha, beta and gamma. The alpha chain contains the guanine nucleotide binding site.

Guanine nucleotide-binding proteins (G proteins) are involved as modulators or transducers in various transmembrane signaling systems. This is Guanine nucleotide-binding protein alpha-13 subunit from Caenorhabditis briggsae.